An 87-amino-acid polypeptide reads, in one-letter code: Small ribosomal subunit protein uS15 (87 aa).

This sequence belongs to the universal ribosomal protein uS15 family. As to quaternary structure, part of the 30S ribosomal subunit. Forms a bridge to the 50S subunit in the 70S ribosome, contacting the 23S rRNA.

Functionally, one of the primary rRNA binding proteins, it binds directly to 16S rRNA where it helps nucleate assembly of the platform of the 30S subunit by binding and bridging several RNA helices of the 16S rRNA. Forms an intersubunit bridge (bridge B4) with the 23S rRNA of the 50S subunit in the ribosome. This Clostridium kluyveri (strain NBRC 12016) protein is Small ribosomal subunit protein uS15.